A 95-amino-acid polypeptide reads, in one-letter code: Acyl carrier protein (95 aa).

The region spanning 4 to 79 (KEIFERIEQV…HVMELTLDLV (76 aa)) is the Carrier domain. Residue serine 39 is modified to O-(pantetheine 4'-phosphoryl)serine.

The protein belongs to the acyl carrier protein (ACP) family. Post-translationally, 4'-phosphopantetheine is transferred from CoA to a specific serine of apo-ACP by AcpS. This modification is essential for activity because fatty acids are bound in thioester linkage to the sulfhydryl of the prosthetic group.

It localises to the cytoplasm. Its pathway is lipid metabolism; fatty acid biosynthesis. Its function is as follows. Carrier of the growing fatty acid chain in fatty acid biosynthesis. The chain is Acyl carrier protein from Saccharopolyspora erythraea (strain ATCC 11635 / DSM 40517 / JCM 4748 / NBRC 13426 / NCIMB 8594 / NRRL 2338).